The chain runs to 348 residues: Fructose-1,6-bisphosphatase class 1 2 (348 aa).

The Mg(2+) site is built by E93, D117, L119, and D120. Substrate contacts are provided by residues 120 to 123 (DGSS), N213, Y244, and K274. E280 is a binding site for Mg(2+).

It belongs to the FBPase class 1 family. Homotetramer. It depends on Mg(2+) as a cofactor.

It is found in the cytoplasm. The catalysed reaction is beta-D-fructose 1,6-bisphosphate + H2O = beta-D-fructose 6-phosphate + phosphate. Its pathway is carbohydrate biosynthesis; gluconeogenesis. In Christiangramia forsetii (strain DSM 17595 / CGMCC 1.15422 / KT0803) (Gramella forsetii), this protein is Fructose-1,6-bisphosphatase class 1 2.